The following is a 114-amino-acid chain: UPF0102 protein HP_0823 (114 aa).

The protein belongs to the UPF0102 family.

This is UPF0102 protein HP_0823 from Helicobacter pylori (strain ATCC 700392 / 26695) (Campylobacter pylori).